Here is a 458-residue protein sequence, read N- to C-terminus: Bone morphogenetic protein 3 (458 aa).

Residues 1-23 (MAECRPWLVLWVGCCGCLCLALG) form the signal peptide. Residues 24–348 (ELLNDGLLAV…EQTLKKARRK (325 aa)) constitute a propeptide that is removed on maturation. An N-linked (GlcNAc...) asparagine glycan is attached at Asn-107. Disordered stretches follow at residues 244-275 (DSVV…KKRS) and 303-335 (ERKP…SQTL). Residues 320–329 (NKKKLRKGSR) show a composition bias toward basic residues. 3 disulfides stabilise this stretch: Cys-356/Cys-423, Cys-385/Cys-455, and Cys-389/Cys-457. The N-linked (GlcNAc...) asparagine glycan is linked to Asn-449.

This sequence belongs to the TGF-beta family. In terms of assembly, homodimer. Can form heterodimers with ADMP, BMP-2-I and/or BMP-2-II, and DERRIERE.

It localises to the secreted. Dorsalizing factor. Antagonizes mesoderm formation by ventralizing BMPs. The polypeptide is Bone morphogenetic protein 3 (bmp3) (Xenopus laevis (African clawed frog)).